The chain runs to 430 residues: Histidine--tRNA ligase (430 aa).

It belongs to the class-II aminoacyl-tRNA synthetase family. In terms of assembly, homodimer.

It localises to the cytoplasm. It catalyses the reaction tRNA(His) + L-histidine + ATP = L-histidyl-tRNA(His) + AMP + diphosphate + H(+). The polypeptide is Histidine--tRNA ligase (Chlamydia felis (strain Fe/C-56) (Chlamydophila felis)).